The following is a 135-amino-acid chain: uncharacterized protein (135 aa).

A disordered region spans residues 100-125 (KESPATSSEDISSCSDCDSERLQSDD). Over residues 106 to 115 (SSEDISSCSD) the composition is skewed to low complexity.

This is an uncharacterized protein from Microplitis demolitor (Parasitoid wasp).